A 170-amino-acid polypeptide reads, in one-letter code: Thialysine N-epsilon-acetyltransferase (170 aa).

Residues 4-168 (VRIREAKEGD…FQGEATRKLA (165 aa)) form the N-acetyltransferase domain. Residue 27-28 (FE) participates in substrate binding. N6-acetyllysine is present on Lys29. Position 92 (Glu92) interacts with substrate. Residues 94–96 (IYV), 102–107 (GQGIGS), 133–135 (NQR), and Tyr140 contribute to the acetyl-CoA site. Residue Tyr140 is the Proton donor of the active site. A substrate-binding site is contributed by Glu152.

This sequence belongs to the acetyltransferase family. As to quaternary structure, homodimer. As to expression, widely expressed. Under physiological conditions, SSAT2 is expressed at lower level that SSAT1 (SSAT). Many tissues express only SSAT1, several tissues express both SSAT1 and SSAT2, and bone, cervix, ovary and pineal gland expressed only SSAT2.

Its subcellular location is the cytoplasm. It catalyses the reaction S-(2-aminoethyl)-L-cysteine + acetyl-CoA = S-(2-acetamidoethyl)-L-cysteine + CoA + H(+). The enzyme catalyses an alkane-alpha,omega-diamine + acetyl-CoA = an N-acetylalkane-alpha,omega-diamine + CoA + H(+). In terms of biological role, catalyzes the N-acetylation of the amino acid thialysine (S-(2-aminoethyl)-L-cysteine), a L-lysine analog with the 4-methylene group substituted with a sulfur. May also catalyze acetylation of polyamines, such as norspermidine, spermidine or spermine. However, ability to acetylate polyamines is weak, suggesting that it does not act as a diamine acetyltransferase in vivo. The chain is Thialysine N-epsilon-acetyltransferase from Homo sapiens (Human).